The following is a 236-amino-acid chain: Ribonuclease P protein component 3 (236 aa).

Belongs to the eukaryotic/archaeal RNase P protein component 3 family. Consists of a catalytic RNA component and at least 4-5 protein subunits.

The protein resides in the cytoplasm. It carries out the reaction Endonucleolytic cleavage of RNA, removing 5'-extranucleotides from tRNA precursor.. Its function is as follows. Part of ribonuclease P, a protein complex that generates mature tRNA molecules by cleaving their 5'-ends. The polypeptide is Ribonuclease P protein component 3 (Natronomonas pharaonis (strain ATCC 35678 / DSM 2160 / CIP 103997 / JCM 8858 / NBRC 14720 / NCIMB 2260 / Gabara) (Halobacterium pharaonis)).